Reading from the N-terminus, the 372-residue chain is L-selectin (372 aa).

The first 28 residues, 1 to 28 (MIFPRKCQSTQRDLWNIFKLWGWTMLCC), serve as a signal peptide directing secretion. A propeptide spanning residues 29-38 (DFLAHHGTDC) is cleaved from the precursor. Topologically, residues 39 to 332 (WTYHYSENPM…FSMIKEGDYN (294 aa)) are extracellular. Positions 55–155 (RFCRENYTDL…ACHKPKAALC (101 aa)) constitute a C-type lectin domain. Disulfide bonds link cysteine 57/cysteine 155, cysteine 128/cysteine 147, cysteine 128/cysteine 160, cysteine 160/cysteine 171, cysteine 165/cysteine 180, cysteine 182/cysteine 191, cysteine 197/cysteine 241, cysteine 227/cysteine 254, cysteine 259/cysteine 303, and cysteine 289/cysteine 316. N-linked (GlcNAc...) asparagine glycans are attached at residues asparagine 60 and asparagine 104. Ca(2+)-binding residues include glutamate 118, asparagine 120, glutamate 126, asparagine 143, and aspartate 144. Residues 156-192 (YTASCQPWSCSGHGECVEIINNYTCNCDVGYYGPQCQ) enclose the EGF-like domain. A glycan (N-linked (GlcNAc...) asparagine) is linked at asparagine 177. Sushi domains follow at residues 195–256 (IQCE…TCQV) and 257–318 (IQCE…ICQK). N-linked (GlcNAc...) asparagine glycosylation is found at asparagine 226, asparagine 232, asparagine 246, and asparagine 271. Residues 333–355 (PLFIPVAVIVTAFSGLAFIIWLA) traverse the membrane as a helical segment. At 356-372 (RRLKKGKKSKKSMDDPY) the chain is on the cytoplasmic side.

The protein belongs to the selectin/LECAM family. In terms of assembly, interaction with SELPLG/PSGL1 and PODXL2 is required for promoting recruitment and rolling of leukocytes. This interaction is dependent on the sialyl Lewis X glycan modification of SELPLG and PODXL2, and tyrosine sulfation modifications of SELPLG. Sulfation on 'Tyr-51' of SELPLG is important for L-selectin binding. Post-translationally, N-glycosylated.

It is found in the cell membrane. In terms of biological role, calcium-dependent lectin that mediates cell adhesion by binding to glycoproteins on neighboring cells. Mediates the adherence of lymphocytes to endothelial cells of high endothelial venules in peripheral lymph nodes. Promotes initial tethering and rolling of leukocytes in endothelia. The polypeptide is L-selectin (SELL) (Papio hamadryas (Hamadryas baboon)).